Consider the following 199-residue polypeptide: ATP-dependent Clp protease proteolytic subunit (199 aa).

Ser97 (nucleophile) is an active-site residue. His122 is an active-site residue.

The protein belongs to the peptidase S14 family. Fourteen ClpP subunits assemble into 2 heptameric rings which stack back to back to give a disk-like structure with a central cavity, resembling the structure of eukaryotic proteasomes.

The protein localises to the cytoplasm. The enzyme catalyses Hydrolysis of proteins to small peptides in the presence of ATP and magnesium. alpha-casein is the usual test substrate. In the absence of ATP, only oligopeptides shorter than five residues are hydrolyzed (such as succinyl-Leu-Tyr-|-NHMec, and Leu-Tyr-Leu-|-Tyr-Trp, in which cleavage of the -Tyr-|-Leu- and -Tyr-|-Trp bonds also occurs).. Its function is as follows. Cleaves peptides in various proteins in a process that requires ATP hydrolysis. Has a chymotrypsin-like activity. Plays a major role in the degradation of misfolded proteins. This Geotalea uraniireducens (strain Rf4) (Geobacter uraniireducens) protein is ATP-dependent Clp protease proteolytic subunit.